We begin with the raw amino-acid sequence, 781 residues long: Arf-GAP with coiled-coil, ANK repeat and PH domain-containing protein 2 (781 aa).

In terms of domain architecture, BAR spans 1-226 (MKVTVDFEEC…MKDLGAQLDQ (226 aa)). Residues 266–361 (GIVMEGYLFK…WIKAVQTSIA (96 aa)) form the PH domain. The segment covering 365–378 (REKGDESEKQEKKS) has biased composition (basic and acidic residues). A disordered region spans residues 365 to 390 (REKGDESEKQEKKSSPSTGSLESGSE). Low complexity predominate over residues 379-388 (SPSTGSLESG). An Arf-GAP domain is found at 399 to 521 (ESALQRVQCI…KFVEKQPAAA (123 aa)). A C4-type zinc finger spans residues 414-437 (CCDCGLADPRWASINLGITLCIEC). Positions 520–576 (AAVSPLESRTKVLPQSQEEKRHSAPEKSFLAIEQGAASPRVRSSDSGIQQSVDDSRE) are disordered. ANK repeat units follow at residues 642-671 (NKAT…NVNI), 675-704 (KGRG…NQHA), and 708-737 (DGKD…NEEM).

It is found in the endosome membrane. It localises to the cell membrane. Its activity is regulated as follows. GAP activity stimulated by phosphatidylinositol 4,5-bisphosphate (PIP2) and phosphatidic acid. Its function is as follows. GTPase-activating protein (GAP) for ADP ribosylation factor 6 (ARF6). The sequence is that of Arf-GAP with coiled-coil, ANK repeat and PH domain-containing protein 2 (ACAP2) from Gallus gallus (Chicken).